A 339-amino-acid polypeptide reads, in one-letter code: DNA repair protein RAD51 homolog 1 (339 aa).

Positions 1–22 are disordered; that stretch reads MAMQMQLEASADTSVEEESFGP. Alanine 2 bears the N-acetylalanine mark. Threonine 13 carries the phosphothreonine modification. The residue at position 14 (serine 14) is a Phosphoserine. The 30-residue stretch at 48–77 folds into the HhH domain; that stretch reads TVEAVAYAPKKELINIKGISEAKADKILTE. Tyrosine 54 carries the phosphotyrosine; by ABL1 modification. Glycyl lysine isopeptide (Lys-Gly) (interchain with G-Cter in ubiquitin) cross-links involve residues lysine 58 and lysine 64. 127–134 contributes to the ATP binding site; it reads GEFRTGKT. The interaction with PALB2 stretch occupies residues 184 to 257; the sequence is DVLDNVAYAR…FLRMLLRLAD (74 aa). The Nuclear export signal; masked by the interaction with BRCA2 motif lies at 245–260; the sequence is LARFLRMLLRLADEFG. Threonine 309 bears the Phosphothreonine; by CHEK1 mark.

This sequence belongs to the RecA family. RAD51 subfamily. Forms linear homooligomers, giving rise to a RAD51 nucleoprotein filament, which is essential for strand-pairing reactions during DNA recombination. Interacts with BRCA1 and either directly or indirectly with p53. Interacts with XRCC3, RAD54L and RAD54B. Interacts with the BCDX2 subcomplex RAD51C:RAD51B. Component of the homologous recombination repair (HR) complex composed of ERCC5/XPG, BRCA2, PALB2, DSS1 and RAD51. Interacts directly with PALB2 which may serve as a scaffold for a HR complex containing PALB2, BRCA2, RAD51C, RAD51 and XRCC3. Interacts with RAD51AP1 and RAD51AP2. Interacts with CHEK1, and this may require prior phosphorylation of CHEK1. Interacts with the MND1-PSMC3IP heterodimer. Found in a complex, at least composed of BLM, RAD51 and SPIDR; the complex formation is mediated by SPIDR. Interacts with SPIDR; the interaction is direct and recruits RAD51 to DNA damage sites. Interacts with FIGNL1 (via N-terminal one-half region); the interaction is direct. Interacts with RAD51AP1 (via C-terminal region); the interaction is direct. Interacts with NABP2, RPA1, PALB2 and RAD51. Interacts with SWI5/C9orf119, and at lower level with SFR1/MEIR5. Interacts with hyperphosphorylated RPA2; this interaction is necessary for efficient recruitment to chromatin in response to DNA damage. Interacts with SWSAP1; involved in homologous recombination repair. Interacts with PARPBP, BRCA2 and RECQL5; these interactions interfere with the formation of the RAD51-DNA homologous recombination structure. Interacts with POLQ; POLQ acts as an inhibitor of homology-recombination repair (HR) pathway by limiting RAD51 accumulation at resected ends. Interacts with POLN. Interacts with FBH1. Interacts with RFWD3. Interacts with the MCM8-MCM9 complex; the interaction recruits RAD51 to DNA damage sites. Component of a multiprotein complex with MEIOB and SPATA22. Interacts with the complex BRME1:HSF2BP:BRCA2. Interacts with HELQ; stimulating HELQ DNA helicase activity and ability to unwing DNA. Interacts with MMS22L; the interaction is direct and promotes recruitment of RAD51 to sites of DNA damage. Interacts with the ATAD5 RFC-like complex. Within the ATAD5 RFC-like complex, interacts with ATAD5 (via N-terminus); the interaction is direct and enhanced under replication stress. Interacts with WDR48; the interaction is enhanced under replication stress. Interacts with DNA helicase ZGRF1; the interaction promotes RAD51 strand exchange activity. Interacts (when phosphorylated) with TOPBP1; interaction takes place following phosphorylation by CK2 and PLK1 and promotes recruitment to DNA damage sites. Interacts with GRB2; this interaction inhibits RAD51 ATPase activity to stabilize RAD51 on stalled replication forks. In terms of processing, ubiquitinated by the SCF(FBH1) E3 ubiquitin ligase complex, regulating RAD51 subcellular location and preventing its association with DNA. Ubiquitinated by RFWD3 in response to DNA damage: ubiquitination leads to degradation by the proteasome, promoting homologous recombination. Phosphorylation of Thr-309 by CHEK1 may enhance association with chromatin at sites of DNA damage and promote DNA repair by homologous recombination. Phosphorylated at Ser-14 by PLK1, triggering phosphorylation at Thr-13 by CK2, thereby promoting interaction with TOPBP1 and recruitment to DNA damage sites during S-phase. Phosphorylation by ABL1 inhibits function. As to expression, expressed in the testes (at protein level). Expressed in the brain (at protein level). Expressed in the thymus, spleen, ovary and small intestine.

It is found in the nucleus. The protein resides in the cytoplasm. The protein localises to the perinuclear region. It localises to the mitochondrion matrix. Its subcellular location is the chromosome. It is found in the cytoskeleton. The protein resides in the microtubule organizing center. The protein localises to the centrosome. In terms of biological role, plays an important role in homologous strand exchange, a key step in DNA repair through homologous recombination (HR). Binds to single-stranded DNA in an ATP-dependent manner to form nucleoprotein filaments which are essential for the homology search and strand exchange. Catalyzes the recognition of homology and strand exchange between homologous DNA partners to form a joint molecule between a processed DNA break and the repair template. Recruited to resolve stalled replication forks during replication stress. Part of a PALB2-scaffolded HR complex containing BRCA2 and RAD51C and which is thought to play a role in DNA repair by HR. Plays a role in regulating mitochondrial DNA copy number under conditions of oxidative stress in the presence of RAD51C and XRCC3. Also involved in interstrand cross-link repair. The sequence is that of DNA repair protein RAD51 homolog 1 from Mus musculus (Mouse).